The chain runs to 254 residues: uncharacterized protein (254 aa).

The disordered stretch occupies residues 60 to 161 (PKSPTTTSIS…PEIPQAAPGT (102 aa)). 2 stretches are compositionally biased toward low complexity: residues 63-77 (PTTT…STTP) and 89-146 (TPIP…TTTS).

This is an uncharacterized protein from Caenorhabditis elegans.